Consider the following 381-residue polypeptide: Chorismate synthase (381 aa).

Positions 41 and 47 each coordinate NADP(+). FMN-binding positions include 127–129, 247–248, Gly291, 306–310, and Arg332; these read RAS, QA, and KPIPT.

It belongs to the chorismate synthase family. In terms of assembly, homotetramer. FMNH2 serves as cofactor.

It carries out the reaction 5-O-(1-carboxyvinyl)-3-phosphoshikimate = chorismate + phosphate. It functions in the pathway metabolic intermediate biosynthesis; chorismate biosynthesis; chorismate from D-erythrose 4-phosphate and phosphoenolpyruvate: step 7/7. Catalyzes the anti-1,4-elimination of the C-3 phosphate and the C-6 proR hydrogen from 5-enolpyruvylshikimate-3-phosphate (EPSP) to yield chorismate, which is the branch point compound that serves as the starting substrate for the three terminal pathways of aromatic amino acid biosynthesis. This reaction introduces a second double bond into the aromatic ring system. In Anaeromyxobacter dehalogenans (strain 2CP-C), this protein is Chorismate synthase.